The primary structure comprises 246 residues: UDP-N-acetyl-D-mannosaminuronic acid transferase (246 aa).

It belongs to the glycosyltransferase 26 family.

The enzyme catalyses UDP-N-acetyl-alpha-D-mannosaminouronate + N-acetyl-alpha-D-glucosaminyl-di-trans,octa-cis-undecaprenyl diphosphate = beta-D-ManNAcA-(1-&gt;4)-alpha-D-GlcNAc-di-trans,octa-cis-undecaprenyl diphosphate + UDP + H(+). Its pathway is bacterial outer membrane biogenesis; enterobacterial common antigen biosynthesis. Functionally, catalyzes the synthesis of Und-PP-GlcNAc-ManNAcA (Lipid II), the second lipid-linked intermediate involved in enterobacterial common antigen (ECA) synthesis. In Yersinia pseudotuberculosis serotype IB (strain PB1/+), this protein is UDP-N-acetyl-D-mannosaminuronic acid transferase.